The sequence spans 472 residues: 3-isopropylmalate dehydratase large subunit (472 aa).

[4Fe-4S] cluster is bound by residues Cys-353, Cys-414, and Cys-417.

The protein belongs to the aconitase/IPM isomerase family. LeuC type 1 subfamily. Heterodimer of LeuC and LeuD. It depends on [4Fe-4S] cluster as a cofactor.

The enzyme catalyses (2R,3S)-3-isopropylmalate = (2S)-2-isopropylmalate. It functions in the pathway amino-acid biosynthesis; L-leucine biosynthesis; L-leucine from 3-methyl-2-oxobutanoate: step 2/4. Catalyzes the isomerization between 2-isopropylmalate and 3-isopropylmalate, via the formation of 2-isopropylmaleate. This chain is 3-isopropylmalate dehydratase large subunit, found in Acinetobacter baumannii (strain AB307-0294).